Here is a 425-residue protein sequence, read N- to C-terminus: UPF0597 protein VP2173 (425 aa).

This sequence belongs to the UPF0597 family.

The polypeptide is UPF0597 protein VP2173 (Vibrio parahaemolyticus serotype O3:K6 (strain RIMD 2210633)).